Here is a 132-residue protein sequence, read N- to C-terminus: DNA-directed RNA polymerase subunit Rpo8 (132 aa).

This sequence belongs to the archaeal Rpo8 RNA polymerase subunit family. Part of the 13-subunit RNA polymerase complex.

It localises to the cytoplasm. The enzyme catalyses RNA(n) + a ribonucleoside 5'-triphosphate = RNA(n+1) + diphosphate. Functionally, DNA-dependent RNA polymerase (RNAP) catalyzes the transcription of DNA into RNA using the four ribonucleoside triphosphates as substrates. The sequence is that of DNA-directed RNA polymerase subunit Rpo8 from Saccharolobus solfataricus (strain ATCC 35092 / DSM 1617 / JCM 11322 / P2) (Sulfolobus solfataricus).